The sequence spans 289 residues: Cyclin-dependent kinase inhibitor 4 (289 aa).

3 disordered regions span residues Met-1–Ile-31, Leu-56–Ser-160, and Ser-227–Glu-248. Gly residues predominate over residues Ala-13–Glu-28. The span at Leu-56–Ser-80 shows a compositional bias: low complexity. Residues Cys-134–Leu-144 show a composition bias toward polar residues.

It belongs to the CDI family. ICK/KRP subfamily. In terms of assembly, specifically interacts with CDKA-1, but not with CDKB1-1. Interacts with CYCD4-1. Binds to FBL17. Expressed in leaves and flowers and at lower levels in roots.

Its subcellular location is the nucleus. It is found in the nucleoplasm. In terms of biological role, binds and inhibits CYCD2-1/CDKA-1 complex kinase activity. May target specifically CDKA-1. This is Cyclin-dependent kinase inhibitor 4 (KRP4) from Arabidopsis thaliana (Mouse-ear cress).